The following is a 397-amino-acid chain: Elongation factor Tu (397 aa).

In terms of domain architecture, tr-type G spans K10–E206. A G1 region spans residues G19–T26. Residue G19–T26 coordinates GTP. T26 is a Mg(2+) binding site. The segment at G60–S64 is G2. The interval D81 to G84 is G3. GTP contacts are provided by residues D81 to H85 and N136 to D139. The interval N136–D139 is G4. The tract at residues S174–L176 is G5.

Belongs to the TRAFAC class translation factor GTPase superfamily. Classic translation factor GTPase family. EF-Tu/EF-1A subfamily. As to quaternary structure, monomer.

It localises to the cytoplasm. It carries out the reaction GTP + H2O = GDP + phosphate + H(+). GTP hydrolase that promotes the GTP-dependent binding of aminoacyl-tRNA to the A-site of ribosomes during protein biosynthesis. The protein is Elongation factor Tu of Clostridium tetani (strain Massachusetts / E88).